Here is a 234-residue protein sequence, read N- to C-terminus: Large ribosomal subunit protein uL1 (234 aa).

This sequence belongs to the universal ribosomal protein uL1 family. As to quaternary structure, part of the 50S ribosomal subunit.

Its function is as follows. Binds directly to 23S rRNA. The L1 stalk is quite mobile in the ribosome, and is involved in E site tRNA release. Functionally, protein L1 is also a translational repressor protein, it controls the translation of the L11 operon by binding to its mRNA. This Maridesulfovibrio salexigens (strain ATCC 14822 / DSM 2638 / NCIMB 8403 / VKM B-1763) (Desulfovibrio salexigens) protein is Large ribosomal subunit protein uL1.